The sequence spans 986 residues: Anoctamin-1 (986 aa).

At 1–333 (MRVNEKYSTL…FGEKIGLYFA (333 aa)) the chain is on the cytoplasmic side. The interval 79–121 (LVRRVQHSDTPSGARSVKQDHPLPGKGASLDAGSGEPPMDYHE) is disordered. 2 positions are modified to phosphoserine: serine 107 and serine 196. The chain crosses the membrane as a helical span at residues 334 to 354 (WLGVYTQMLIPASIVGIIVFL). The Extracellular segment spans residues 355-406 (YGCATMDENIPSMEMCDQRHNITMCPLCDKTCSYWKMSSACATARASHLFDN). 4 cysteine pairs are disulfide-bonded: cysteine 370/cysteine 395, cysteine 379/cysteine 862, cysteine 382/cysteine 386, and cysteine 651/cysteine 656. A helical transmembrane segment spans residues 407–427 (PATVFFSVFMALWAATFMEHW). Glutamate 425 contacts Ca(2+). Over 428–519 (KRKQMRLNYR…RDRFPAYLTN (92 aa)) the chain is Cytoplasmic. Residues 520–540 (LVSIIFMIAVTFAIVLGVIIY) form a helical membrane-spanning segment. The Extracellular segment spans residues 541–568 (RISMAAALAMNSSPSVRSNIRVTVTATA). The chain crosses the membrane as a helical span at residues 569–589 (VIINLVVIILLDEVYGCIARW). Residues 590–607 (LTKIEVPKTEKSFEERLI) lie on the Cytoplasmic side of the membrane. A helical membrane pass occupies residues 608-628 (FKAFLLKFVNSYTPIFYVAFF). Residues 629–657 (KGRFVGRPGDYVYIFRSFRMEECAPGGCL) are Extracellular-facing. A helical membrane pass occupies residues 658-678 (MELCIQLSIIMLGKQLIQNNL). Ca(2+) is bound by residues asparagine 677, glutamate 680, glutamate 728, glutamate 731, glutamate 760, and aspartate 764. Residues 679–725 (FEIGIPKMKKLIRYLKLKQQSPPDHEECVKRKQRYEVDYNLEPFAGL) are Cytoplasmic-facing. Helical transmembrane passes span 726–746 (TPEY…VASF) and 747–767 (PLAP…DAKK). Residues 768–784 (FVTELRRPVAVRAKDIG) lie on the Cytoplasmic side of the membrane. The helical transmembrane segment at 785–805 (IWYNILRGIGKLAVIINAFVI) threads the bilayer. Residues 806-892 (SFTSDFIPRL…FWAVLAARLA (87 aa)) are Extracellular-facing. Residue asparagine 832 is glycosylated (N-linked (GlcNAc...) asparagine). The chain crosses the membrane as a helical span at residues 893–913 (FVIVFQNLVMFMSDFVDWVIP). 2 residues coordinate Ca(2+): aspartate 909 and aspartate 914. The Cytoplasmic segment spans residues 914–986 (DIPKDISQQI…PSHAYHGGVL (73 aa)). Over residues 951–960 (KERQKDEPPC) the composition is skewed to basic and acidic residues. The tract at residues 951–986 (KERQKDEPPCNHHNTKACPDSLGSPAPSHAYHGGVL) is disordered.

This sequence belongs to the anoctamin family. In terms of assembly, homodimer. Interacts with CFTR. Interacts with TRPV4. Expressed in nasal epithelial cells (at protein level). In the kidney, expressed in the collecting duct (at protein level). Broadly expressed with higher levels in liver, skeletal muscle and gastrointestinal muscles. Expressed in eccrine sweat glands.

Its subcellular location is the apical cell membrane. It localises to the presynapse. It carries out the reaction chloride(in) = chloride(out). ATP and calmodulin are essential for its activation. Channel activity is inhibited by CFTR protein and by chloride inhibitors such as niflumic acid (NFA) and 4,4'-diisothiocyanatostilbene-2,2'-disulfonic acid (DIDS). Activated by heat with activation seen at temperatures above 44 degrees Celsius. Activated by BDNF in radial glial cells. Calcium-activated chloride channel (CaCC). Plays a role in transepithelial anion transport and smooth muscle contraction. Required for the normal functioning of the interstitial cells of Cajal (ICCs) which generate electrical pacemaker activity in gastrointestinal smooth muscles. Acts as a major contributor to basal and stimulated chloride conductance in airway epithelial cells and plays an important role in tracheal cartilage development. Required for CFTR activation by enhancing endoplasmic reticulum Ca(2+) store release and is also required for CFTR membrane expression. Required for basal and ATP-dependent mucus secretion in airways and intestine, probably by controlling exocytosis of mucus-filled granules by providing Ca(2+) to an apical signaling compartment. Contributes to airway mucus expression induced by interleukins IL3 and IL8 and by the asthma-associated protein CLCA1 and is required for expression of mucin MUC5AC. However, was shown in another study not to be required for MUC5AC expression. Plays a role in the propagation of Ca(2+) waves in Kolliker's organ in the cochlea and contributes to the refinement of auditory brainstem circuitries prior to hearing onset. In vomeronasal sensory neurons, modulates spontaneous firing patterns in the absence of stimuli as well as the firing pattern of pheromone-evoked activity. Responsible for calcium-activated chloride channel activity in type I taste cells of the vallate papillae. Acts as a heat sensor in nociceptive neurons. In dorsal root ganglion neurons, plays a role in mediating non-histaminergic Mas-related G-protein coupled receptor (MRGPR)-dependent itching, acting as a downstream effector of MRGPRs. In the developing brain, required for the Ca(2+)-dependent process extension of radial glial cells. Functionally, calcium-activated chloride channel (CaCC). Contributes to calcium-activated chloride secretion in human sweat gland epithelial cells. Shows increased basal chloride permeability and decreased Ca(2+)-induced chloride permeability. Its function is as follows. Calcium-activated chloride channel (CaCC). Shows increased sensitivity to intracellular Ca(2+). The chain is Anoctamin-1 (ANO1) from Homo sapiens (Human).